The following is a 637-amino-acid chain: Chaperone protein DnaK (637 aa).

T203 carries the post-translational modification Phosphothreonine; by autocatalysis. The segment at 600–637 (SAVYGQQQEQGAPAQEEPSAEGKKNDDEGTVEGEFREV) is disordered. Low complexity predominate over residues 604 to 616 (GQQQEQGAPAQEE). Basic and acidic residues predominate over residues 619–637 (AEGKKNDDEGTVEGEFREV).

The protein belongs to the heat shock protein 70 family.

Its function is as follows. Acts as a chaperone. The protein is Chaperone protein DnaK of Dehalococcoides mccartyi (strain ATCC BAA-2266 / KCTC 15142 / 195) (Dehalococcoides ethenogenes (strain 195)).